Consider the following 163-residue polypeptide: Large ribosomal subunit protein uL10 (163 aa).

This sequence belongs to the universal ribosomal protein uL10 family. As to quaternary structure, part of the ribosomal stalk of the 50S ribosomal subunit. The N-terminus interacts with L11 and the large rRNA to form the base of the stalk. The C-terminus forms an elongated spine to which L12 dimers bind in a sequential fashion forming a multimeric L10(L12)X complex.

Functionally, forms part of the ribosomal stalk, playing a central role in the interaction of the ribosome with GTP-bound translation factors. In Glaesserella parasuis serovar 5 (strain SH0165) (Haemophilus parasuis), this protein is Large ribosomal subunit protein uL10.